The primary structure comprises 462 residues: MSDPFYPHGHGGAAGGEGAAAAGYSSYEVDLIAARYGGRPLANPSSAAADLDARLAGARRSMGVLYHQPIMGSHSTVEQIEALYSSNTMTKRPRLESSLPIYPQRPGEKDCAFYMMTRTCKFGGSCKFDHPQWVPEGGIPNWKEQAANVEESYPEQEGEPDCPFFMKTGKCKFGSKCKFNHPKEKVNALASGNTNDKHLIADSSILPVRPSEPLCSFYAKTGKCKFRAMCKFNHPKDIEIPSSQNEPESAVTVEGETDIGSAADSVSAKMQTPVAAAQEFNSKGLPMRPGEVDCPFYMKMGSCKFGSTCRFNHPDRLVLNFPLPLGQTILPTPESMLLNSSANFMQGFDFHAAHMPVGPGPVTYPQRPGATVCDFYMKTGFCKFADRCKFHHPIDRSAPDPSANWEPAEESVQLTLAGLPRREDAVVCAFYMKTGVCKFGMQCKFDHPPPQEAIAKVSNSGS.

6 consecutive C3H1-type zinc fingers follow at residues 105–133, 156–184, 209–237, 288–316, 367–395, and 422–450; these read RPGEKDCAFYMMTRTCKFGGSCKFDHPQW, QEGEPDCPFFMKTGKCKFGSKCKFNHPKE, RPSEPLCSFYAKTGKCKFRAMCKFNHPKD, RPGEVDCPFYMKMGSCKFGSTCRFNHPDR, RPGATVCDFYMKTGFCKFADRCKFHHPID, and REDAVVCAFYMKTGVCKFGMQCKFDHPPP.

In Oryza sativa subsp. japonica (Rice), this protein is Zinc finger CCCH domain-containing protein 8.